Consider the following 436-residue polypeptide: Gamma-glutamyl phosphate reductase (436 aa).

The protein belongs to the gamma-glutamyl phosphate reductase family.

The protein resides in the cytoplasm. The enzyme catalyses L-glutamate 5-semialdehyde + phosphate + NADP(+) = L-glutamyl 5-phosphate + NADPH + H(+). It participates in amino-acid biosynthesis; L-proline biosynthesis; L-glutamate 5-semialdehyde from L-glutamate: step 2/2. Catalyzes the NADPH-dependent reduction of L-glutamate 5-phosphate into L-glutamate 5-semialdehyde and phosphate. The product spontaneously undergoes cyclization to form 1-pyrroline-5-carboxylate. This is Gamma-glutamyl phosphate reductase from Prochlorococcus marinus (strain MIT 9515).